The sequence spans 216 residues: UPF0193 protein EVG1 homolog (216 aa).

This sequence belongs to the UPF0193 (EVG1) family.

In Mus musculus (Mouse), this protein is UPF0193 protein EVG1 homolog.